Here is a 441-residue protein sequence, read N- to C-terminus: Probable indole-3-acetic acid-amido synthetase GH3.9 (441 aa).

The protein belongs to the IAA-amido conjugating enzyme family. As to expression, expressed in etiolated seedlings and roots.

Its function is as follows. May catalyze the synthesis of indole-3-acetic acid (IAA)-amino acid conjugates, providing a mechanism for the plant to cope with the presence of excess auxin. The sequence is that of Probable indole-3-acetic acid-amido synthetase GH3.9 (GH3.9) from Oryza sativa subsp. japonica (Rice).